A 723-amino-acid chain; its full sequence is Nuclear hormone receptor HR96 (723 aa).

A DNA-binding region (nuclear receptor) is located at residues 4-79; sequence PKNCAVCGDK…IGMKSENIMS (76 aa). 2 consecutive NR C4-type zinc fingers follow at residues 7 to 27 and 43 to 67; these read CAVC…CESC and CPFN…LRKC. Positions 95 to 163 are disordered; that stretch reads AKRRLMENGT…QASSPGTQVN (69 aa). Polar residues-rich tracts occupy residues 122–142 and 151–163; these read DSSS…SCGS and SGRQ…TQVN. The NR LBD domain occupies 483–723; it reads EQMKLRELRL…LREIFDLKNH (241 aa).

It belongs to the nuclear hormone receptor family. NR1 subfamily.

It is found in the nucleus. Functionally, binds selectively to the HSP27 20E response element. This is Nuclear hormone receptor HR96 (Hr96) from Drosophila melanogaster (Fruit fly).